The sequence spans 81 residues: ATP synthase subunit c (81 aa).

The next 2 membrane-spanning stretches (helical) occupy residues 7 to 27 (FVALAAGLIIGLGAIGACIGI) and 53 to 73 (FLLAGLIDAAFLIGVGIAMMF).

Belongs to the ATPase C chain family. F-type ATPases have 2 components, F(1) - the catalytic core - and F(0) - the membrane proton channel. F(1) has five subunits: alpha(3), beta(3), gamma(1), delta(1), epsilon(1). F(0) has three main subunits: a(1), b(2) and c(10-14). The alpha and beta chains form an alternating ring which encloses part of the gamma chain. F(1) is attached to F(0) by a central stalk formed by the gamma and epsilon chains, while a peripheral stalk is formed by the delta and b chains.

The protein localises to the cell inner membrane. In terms of biological role, f(1)F(0) ATP synthase produces ATP from ADP in the presence of a proton or sodium gradient. F-type ATPases consist of two structural domains, F(1) containing the extramembraneous catalytic core and F(0) containing the membrane proton channel, linked together by a central stalk and a peripheral stalk. During catalysis, ATP synthesis in the catalytic domain of F(1) is coupled via a rotary mechanism of the central stalk subunits to proton translocation. Key component of the F(0) channel; it plays a direct role in translocation across the membrane. A homomeric c-ring of between 10-14 subunits forms the central stalk rotor element with the F(1) delta and epsilon subunits. The protein is ATP synthase subunit c of Azoarcus sp. (strain BH72).